The sequence spans 417 residues: Probable glucuronosyltransferase Os01g0926700 (417 aa).

Residues 1 to 3 (MRR) lie on the Cytoplasmic side of the membrane. Residues 4–24 (WVLAIAILAAAVCFFLGAQAQ) traverse the membrane as a helical; Signal-anchor for type II membrane protein segment. Topologically, residues 25-417 (EVRQGHQTER…AGPVGDLKPW (393 aa)) are lumenal. Residues Asn-144 and Asn-405 are each glycosylated (N-linked (GlcNAc...) asparagine).

The protein belongs to the glycosyltransferase 47 family.

Its subcellular location is the golgi apparatus membrane. Involved in the synthesis of glucuronoxylan hemicellulose in secondary cell walls. The polypeptide is Probable glucuronosyltransferase Os01g0926700 (Oryza sativa subsp. japonica (Rice)).